Reading from the N-terminus, the 134-residue chain is Small ribosomal subunit protein uS8c (134 aa).

The protein belongs to the universal ribosomal protein uS8 family. As to quaternary structure, part of the 30S ribosomal subunit.

Its subcellular location is the plastid. The protein localises to the chloroplast. Its function is as follows. One of the primary rRNA binding proteins, it binds directly to 16S rRNA central domain where it helps coordinate assembly of the platform of the 30S subunit. The polypeptide is Small ribosomal subunit protein uS8c (rps8) (Helianthus annuus (Common sunflower)).